We begin with the raw amino-acid sequence, 257 residues long: Phosphonates import ATP-binding protein PhnC 1 (257 aa).

Residues leucine 2–proline 246 form the ABC transporter domain. Position 35–42 (glycine 35–serine 42) interacts with ATP.

Belongs to the ABC transporter superfamily. Phosphonates importer (TC 3.A.1.9.1) family. The complex is composed of two ATP-binding proteins (PhnC), two transmembrane proteins (PhnE) and a solute-binding protein (PhnD).

The protein localises to the cell inner membrane. The enzyme catalyses phosphonate(out) + ATP + H2O = phosphonate(in) + ADP + phosphate + H(+). Part of the ABC transporter complex PhnCDE involved in phosphonates import. Responsible for energy coupling to the transport system. In Ruegeria sp. (strain TM1040) (Silicibacter sp.), this protein is Phosphonates import ATP-binding protein PhnC 1.